The chain runs to 429 residues: Large ribosomal subunit protein mL37 (429 aa).

A mitochondrion-targeting transit peptide spans 1-29 (MALRPVVLRRAPAHSRGILTRPGPPRPRG). Positions 12–45 (PAHSRGILTRPGPPRPRGPLPRTPWTTRGPPPDQ) are disordered. A compositionally biased stretch (pro residues) spans 22-33 (PGPPRPRGPLPR).

It belongs to the mitochondrion-specific ribosomal protein mL37 family. In terms of assembly, component of the mitochondrial ribosome large subunit (39S) which comprises a 16S rRNA and about 50 distinct proteins.

Its subcellular location is the mitochondrion. The chain is Large ribosomal subunit protein mL37 (MRPL37) from Gallus gallus (Chicken).